The following is a 386-amino-acid chain: 3-hydroxyisobutyryl-CoA hydrolase, mitochondrial (386 aa).

The transit peptide at 1 to 32 (MGQREMWRLMSRFNAFKRTNTILHHLRMSKHT) directs the protein to the mitochondrion. Residues Lys55 and Lys92 each carry the N6-acetyllysine; alternate modification. 2 positions are modified to N6-succinyllysine; alternate: Lys55 and Lys92. Substrate contacts are provided by Glu121, Gly146, Glu169, and Asp177. An N6-acetyllysine; alternate modification is found at Lys221. Lys221 carries the post-translational modification N6-succinyllysine; alternate. Ser234 is subject to Phosphoserine. Lys257 carries the post-translational modification N6-succinyllysine. The residue at position 297 (Lys297) is an N6-acetyllysine; alternate. Residue Lys297 is modified to N6-succinyllysine; alternate. N6-succinyllysine is present on Lys301. Residue Lys353 is modified to N6-acetyllysine; alternate. Lys353 bears the N6-succinyllysine; alternate mark. Ser356 carries the phosphoserine modification. An N6-acetyllysine mark is found at Lys360 and Lys365. Residue Lys377 is modified to N6-succinyllysine.

Belongs to the enoyl-CoA hydratase/isomerase family. Highly expressed in liver and kidney, also detected in heart, muscle and brain (at protein level). Not detected in lung.

The protein resides in the mitochondrion. The catalysed reaction is 3-hydroxy-2-methylpropanoyl-CoA + H2O = 3-hydroxy-2-methylpropanoate + CoA + H(+). Its pathway is amino-acid degradation; L-valine degradation. Its function is as follows. Hydrolyzes 3-hydroxyisobutyryl-CoA (HIBYL-CoA), a saline catabolite. Has high activity toward isobutyryl-CoA. Could be an isobutyryl-CoA dehydrogenase that functions in valine catabolism. Also hydrolyzes 3-hydroxypropanoyl-CoA. This is 3-hydroxyisobutyryl-CoA hydrolase, mitochondrial (HIBCH) from Homo sapiens (Human).